The primary structure comprises 160 residues: 3-dehydroquinate dehydratase (160 aa).

The active-site Proton acceptor is tyrosine 22. Residues asparagine 73, histidine 79, and aspartate 86 each coordinate substrate. The Proton donor role is filled by histidine 99. Substrate-binding positions include 100 to 101 and arginine 110; that span reads IS.

The protein belongs to the type-II 3-dehydroquinase family. Homododecamer.

The catalysed reaction is 3-dehydroquinate = 3-dehydroshikimate + H2O. It participates in metabolic intermediate biosynthesis; chorismate biosynthesis; chorismate from D-erythrose 4-phosphate and phosphoenolpyruvate: step 3/7. In terms of biological role, catalyzes a trans-dehydration via an enolate intermediate. The sequence is that of 3-dehydroquinate dehydratase from Campylobacter lari (strain RM2100 / D67 / ATCC BAA-1060).